Consider the following 1028-residue polypeptide: U2 snRNP-associated SURP motif-containing protein (1028 aa).

Disordered stretches follow at residues 1 to 111 (MADK…EDEK) and 141 to 272 (VNAA…DPST). An N-acetylalanine modification is found at A2. The span at 7–16 (GGSQKASSKT) shows a compositional bias: polar residues. Residues 45-54 (TRPKSPRKHN) show a composition bias toward basic residues. Basic and acidic residues predominate over residues 55–64 (YRNESARESL). Phosphoserine is present on S67. A Glycyl lysine isopeptide (Lys-Gly) (interchain with G-Cter in SUMO2) cross-link involves residue K80. A coiled-coil region spans residues 92-121 (AKRTLSKKEQEELKKKEDEKAAAEIYEEFL). 2 stretches are compositionally biased toward basic and acidic residues: residues 97–111 (SKKE…EDEK) and 144–155 (AKEEHETDEKRG). Residues K145 and K168 each participate in a glycyl lysine isopeptide (Lys-Gly) (interchain with G-Cter in SUMO2) cross-link. Residues 169 to 178 (NPPNQSSNER) are compositionally biased toward polar residues. Basic and acidic residues predominate over residues 186–222 (ETKKPPLKKGEKEKKKSNLELFKEELKQIQEERDERH). A coiled-coil region spans residues 192–232 (LKKGEKEKKKSNLELFKEELKQIQEERDERHKTKGRLSRFE). S202 bears the Phosphoserine mark. A Glycyl lysine isopeptide (Lys-Gly) (interchain with G-Cter in SUMO2) cross-link involves residue K208. S236 carries the post-translational modification Phosphoserine. Basic and acidic residues predominate over residues 239–249 (DGQRRSMDAPS). The RRM domain maps to 273–354 (TNLYLGNINP…FEMKLGWGKA (82 aa)). Residues 429–472 (LIHRMIEFVVREGPMFEAMIMNREINNPMFRFLFENQTPAHVYY) form an SURP motif repeat. At S484 the chain carries Phosphoserine. The CID domain occupies 533–678 (LKEEQRDKLE…KLQNIFLGLV (146 aa)). The residue at position 718 (T718) is a Phosphothreonine. Residues K747 and K748 each participate in a glycyl lysine isopeptide (Lys-Gly) (interchain with G-Cter in SUMO2) cross-link. At K759 the chain carries N6-acetyllysine; alternate. K759 participates in a covalent cross-link: Glycyl lysine isopeptide (Lys-Gly) (interchain with G-Cter in SUMO2); alternate. Disordered stretches follow at residues 777 to 840 (KWEL…EEKR) and 854 to 1028 (QDEL…KNKH). Residues 779–809 (ELFDQHEESEEEENQNQEEESEDEEDTQSSK) are a coiled coil. Residues 785–805 (EESEEEENQNQEEESEDEEDT) are compositionally biased toward acidic residues. Phosphoserine occurs at positions 787, 799, and 810. Composition is skewed to basic and acidic residues over residues 809-840 (KSEE…EEKR) and 873-921 (QVEH…TPTR). Glycyl lysine isopeptide (Lys-Gly) (interchain with G-Cter in SUMO2) cross-links involve residues K821, K828, and K831. Residues 836–914 (SEEKRAKLRE…ESRSKDEKEK (79 aa)) are a coiled coil. Position 930 is a phosphothreonine (T930). Residues S945 and S947 each carry the phosphoserine modification. Residues 949 to 979 (KSERSERSERSHKESSRSRSSHKDSPRDVSK) are compositionally biased toward basic and acidic residues. The span at 990 to 1028 (TPKRSRRSRSRSPKKSGKKSRSQSRSPHRSHKKSKKNKH) shows a compositional bias: basic residues.

Belongs to the splicing factor SR family. As to quaternary structure, interacts with ERBB4.

The protein localises to the nucleus. In Pongo abelii (Sumatran orangutan), this protein is U2 snRNP-associated SURP motif-containing protein (U2SURP).